Reading from the N-terminus, the 539-residue chain is G protein-coupled receptor associated sorting protein 3 (539 aa).

Residues 1–10 (MTGSKNKARA) are compositionally biased toward basic residues. Disordered stretches follow at residues 1–112 (MTGS…NWFW) and 134–172 (VAKCENKPSTSIQARAEEPAPRTSHKSRSGAEEEEEENV). Basic and acidic residues-rich tracts occupy residues 66 to 80 (VVAETKEGARPESKA) and 88 to 106 (FNHRTENKFARSTRKDKPS). Residues 134 to 146 (VAKCENKPSTSIQ) show a composition bias toward polar residues.

The protein belongs to the GPRASP family. In terms of assembly, homodimer.

It localises to the cytoplasm. The protein localises to the nucleus. Its function is as follows. Survival and differentiation promoting protein that plays a role in the regulation of neurosynaptogenesis. Induces phosphatase PP2A activity which results in APP dephosphorylation and inhibits BACE1-mediated processing of APP. The sequence is that of G protein-coupled receptor associated sorting protein 3 (Gprasp3) from Mus musculus (Mouse).